Consider the following 103-residue polypeptide: uncharacterized protein (103 aa).

Transmembrane regions (helical) follow at residues 1–21 (MPGV…VFLS), 29–49 (IAFI…TGYF), and 69–89 (VVEW…GLLF).

It is found in the cell membrane. This is an uncharacterized protein from Methanocaldococcus jannaschii (strain ATCC 43067 / DSM 2661 / JAL-1 / JCM 10045 / NBRC 100440) (Methanococcus jannaschii).